We begin with the raw amino-acid sequence, 261 residues long: Protein TfpB (261 aa).

This is Protein TfpB (tfpB) from Moraxella bovis.